A 270-amino-acid polypeptide reads, in one-letter code: Aliphatic sulfonates import ATP-binding protein SsuB (270 aa).

The region spanning Leu-17 to Leu-238 is the ABC transporter domain. Gly-49 to Ser-56 lines the ATP pocket. Residues Ala-249–His-270 form a disordered region.

This sequence belongs to the ABC transporter superfamily. Aliphatic sulfonates importer (TC 3.A.1.17.2) family. In terms of assembly, the complex is composed of two ATP-binding proteins (SsuB), two transmembrane proteins (SsuC) and a solute-binding protein (SsuA).

It is found in the cell inner membrane. The catalysed reaction is ATP + H2O + aliphatic sulfonate-[sulfonate-binding protein]Side 1 = ADP + phosphate + aliphatic sulfonateSide 2 + [sulfonate-binding protein]Side 1.. In terms of biological role, part of the ABC transporter complex SsuABC involved in aliphatic sulfonates import. Responsible for energy coupling to the transport system. This chain is Aliphatic sulfonates import ATP-binding protein SsuB, found in Pseudomonas putida (Arthrobacter siderocapsulatus).